A 343-amino-acid polypeptide reads, in one-letter code: N-acetyl-gamma-glutamyl-phosphate reductase (343 aa).

Residue Cys-147 is part of the active site.

It belongs to the NAGSA dehydrogenase family. Type 1 subfamily.

It localises to the cytoplasm. The enzyme catalyses N-acetyl-L-glutamate 5-semialdehyde + phosphate + NADP(+) = N-acetyl-L-glutamyl 5-phosphate + NADPH + H(+). The protein operates within amino-acid biosynthesis; L-arginine biosynthesis; N(2)-acetyl-L-ornithine from L-glutamate: step 3/4. Catalyzes the NADPH-dependent reduction of N-acetyl-5-glutamyl phosphate to yield N-acetyl-L-glutamate 5-semialdehyde. This chain is N-acetyl-gamma-glutamyl-phosphate reductase, found in Listeria welshimeri serovar 6b (strain ATCC 35897 / DSM 20650 / CCUG 15529 / CIP 8149 / NCTC 11857 / SLCC 5334 / V8).